A 246-amino-acid polypeptide reads, in one-letter code: Lipoprotein-releasing system ATP-binding protein LolD 1 (246 aa).

One can recognise an ABC transporter domain in the interval 6–244; that stretch reads LKLERIRKDL…ASVTNEAASL (239 aa). Position 43–50 (43–50) interacts with ATP; it reads GPSGSGKS.

Belongs to the ABC transporter superfamily. Lipoprotein translocase (TC 3.A.1.125) family. The complex is composed of two ATP-binding proteins (LolD) and two transmembrane proteins (LolC and LolE).

It is found in the cell inner membrane. Functionally, part of the ABC transporter complex LolCDE involved in the translocation of mature outer membrane-directed lipoproteins, from the inner membrane to the periplasmic chaperone, LolA. Responsible for the formation of the LolA-lipoprotein complex in an ATP-dependent manner. The sequence is that of Lipoprotein-releasing system ATP-binding protein LolD 1 from Chlorobium chlorochromatii (strain CaD3).